Reading from the N-terminus, the 142-residue chain is Hemoglobin subunit alpha (142 aa).

Positions 2 to 142 constitute a Globin domain; it reads VLSPADKSNV…VSTVLTSKYR (141 aa). The residue at position 4 (S4) is a Phosphoserine. N6-succinyllysine is present on residues K8 and K12. K17 is subject to N6-acetyllysine; alternate. Residue K17 is modified to N6-succinyllysine; alternate. Y25 is subject to Phosphotyrosine. Phosphoserine is present on S36. N6-succinyllysine is present on K41. Position 50 is a phosphoserine (S50). Position 59 (H59) interacts with O2. H88 contacts heme b. Residue S103 is modified to Phosphoserine. T109 is modified (phosphothreonine). 2 positions are modified to phosphoserine: S125 and S132. Phosphothreonine occurs at positions 135 and 138. Phosphoserine is present on S139.

The protein belongs to the globin family. Heterotetramer of two alpha chains and two beta chains. As to expression, red blood cells.

Involved in oxygen transport from the lung to the various peripheral tissues. In terms of biological role, hemopressin acts as an antagonist peptide of the cannabinoid receptor CNR1. Hemopressin-binding efficiently blocks cannabinoid receptor CNR1 and subsequent signaling. In Chlorocebus aethiops (Green monkey), this protein is Hemoglobin subunit alpha (HBA).